A 475-amino-acid polypeptide reads, in one-letter code: Bifunctional protein HldE (475 aa).

Residues 1–321 (MADKIDISLY…RALHQITASH (321 aa)) are ribokinase. Residue 197 to 200 (NLKE) participates in ATP binding. D266 is an active-site residue. The segment at 346–475 (MTNGCFDILH…TSRLVEKMLN (130 aa)) is cytidylyltransferase.

It in the N-terminal section; belongs to the carbohydrate kinase PfkB family. This sequence in the C-terminal section; belongs to the cytidylyltransferase family. Homodimer.

It carries out the reaction D-glycero-beta-D-manno-heptose 7-phosphate + ATP = D-glycero-beta-D-manno-heptose 1,7-bisphosphate + ADP + H(+). It catalyses the reaction D-glycero-beta-D-manno-heptose 1-phosphate + ATP + H(+) = ADP-D-glycero-beta-D-manno-heptose + diphosphate. It functions in the pathway nucleotide-sugar biosynthesis; ADP-L-glycero-beta-D-manno-heptose biosynthesis; ADP-L-glycero-beta-D-manno-heptose from D-glycero-beta-D-manno-heptose 7-phosphate: step 1/4. It participates in nucleotide-sugar biosynthesis; ADP-L-glycero-beta-D-manno-heptose biosynthesis; ADP-L-glycero-beta-D-manno-heptose from D-glycero-beta-D-manno-heptose 7-phosphate: step 3/4. In terms of biological role, catalyzes the phosphorylation of D-glycero-D-manno-heptose 7-phosphate at the C-1 position to selectively form D-glycero-beta-D-manno-heptose-1,7-bisphosphate. Its function is as follows. Catalyzes the ADP transfer from ATP to D-glycero-beta-D-manno-heptose 1-phosphate, yielding ADP-D-glycero-beta-D-manno-heptose. The protein is Bifunctional protein HldE of Coxiella burnetii (strain Dugway 5J108-111).